We begin with the raw amino-acid sequence, 371 residues long: tRNA-specific 2-thiouridylase MnmA (371 aa).

ATP is bound by residues 13–20 and Met39; that span reads GMSGGVDS. Residues 99-101 form an interaction with target base in tRNA region; the sequence is NPD. The active-site Nucleophile is the Cys104. The cysteines at positions 104 and 200 are disulfide-linked. Gly128 contributes to the ATP binding site. Residues 150–152 are interaction with tRNA; sequence KDQ. Cys200 functions as the Cysteine persulfide intermediate in the catalytic mechanism. Residues 309–310 form an interaction with tRNA region; sequence RY.

The protein belongs to the MnmA/TRMU family.

It is found in the cytoplasm. The enzyme catalyses S-sulfanyl-L-cysteinyl-[protein] + uridine(34) in tRNA + AH2 + ATP = 2-thiouridine(34) in tRNA + L-cysteinyl-[protein] + A + AMP + diphosphate + H(+). Its function is as follows. Catalyzes the 2-thiolation of uridine at the wobble position (U34) of tRNA, leading to the formation of s(2)U34. The chain is tRNA-specific 2-thiouridylase MnmA from Bacillus velezensis (strain DSM 23117 / BGSC 10A6 / LMG 26770 / FZB42) (Bacillus amyloliquefaciens subsp. plantarum).